The chain runs to 198 residues: Prolactin (198 aa).

3 disulfide bridges follow: Cys-4–Cys-11, Cys-58–Cys-173, and Cys-190–Cys-198.

This sequence belongs to the somatotropin/prolactin family. In terms of tissue distribution, pituitary gland.

It localises to the secreted. This is Prolactin from Chelonia mydas (Green sea-turtle).